A 332-amino-acid chain; its full sequence is Diaminopimelate epimerase (332 aa).

Positions 13 and 73 each coordinate substrate. Cysteine 82 serves as the catalytic Proton donor. Residues 83 to 84 (GN), asparagine 172, asparagine 209, and 227 to 228 (ER) each bind substrate. The Proton acceptor role is filled by cysteine 236. 237–238 (GT) provides a ligand contact to substrate.

It belongs to the diaminopimelate epimerase family. As to quaternary structure, homodimer.

The protein localises to the cytoplasm. It carries out the reaction (2S,6S)-2,6-diaminopimelate = meso-2,6-diaminopimelate. Its pathway is amino-acid biosynthesis; L-lysine biosynthesis via DAP pathway; DL-2,6-diaminopimelate from LL-2,6-diaminopimelate: step 1/1. Its function is as follows. Catalyzes the stereoinversion of LL-2,6-diaminopimelate (L,L-DAP) to meso-diaminopimelate (meso-DAP), a precursor of L-lysine and an essential component of the bacterial peptidoglycan. This is Diaminopimelate epimerase from Lactiplantibacillus plantarum (strain ATCC BAA-793 / NCIMB 8826 / WCFS1) (Lactobacillus plantarum).